We begin with the raw amino-acid sequence, 201 residues long: Large ribosomal subunit protein uL4 (201 aa).

A disordered region spans residues 39–72 (RRGTASTKTRAQVSKSGKKMYSQKGTGNARHGDR). The span at 42 to 53 (TASTKTRAQVSK) shows a compositional bias: polar residues.

Belongs to the universal ribosomal protein uL4 family. In terms of assembly, part of the 50S ribosomal subunit.

Functionally, one of the primary rRNA binding proteins, this protein initially binds near the 5'-end of the 23S rRNA. It is important during the early stages of 50S assembly. It makes multiple contacts with different domains of the 23S rRNA in the assembled 50S subunit and ribosome. Its function is as follows. Forms part of the polypeptide exit tunnel. The chain is Large ribosomal subunit protein uL4 from Deinococcus deserti (strain DSM 17065 / CIP 109153 / LMG 22923 / VCD115).